The following is a 1769-amino-acid chain: Tight junction protein 1 (1769 aa).

One can recognise a PDZ 1 domain in the interval Thr23–Lys110. The segment covering Ala102–Val112 has biased composition (basic residues). The segment at Ala102–Leu188 is disordered. Residues Pro123–Val135 are compositionally biased toward acidic residues. Ser125 bears the Phosphoserine mark. Phosphotyrosine is present on Tyr131. The segment covering Arg148–Ser174 has biased composition (basic and acidic residues). Phosphoserine is present on residues Ser174, Ser177, and Ser178. At Thr184 the chain carries Phosphothreonine. Positions Lys185 to Glu263 constitute a PDZ 2 domain. A phosphoserine mark is found at Ser211 and Ser240. Thr266 carries the phosphothreonine modification. 13 positions are modified to phosphoserine: Ser274, Ser276, Ser279, Ser283, Ser289, Ser293, Ser296, Ser299, Ser322, Ser328, Ser333, Ser336, and Ser352. Positions Ala295–Thr362 are disordered. The segment covering His298 to Arg326 has biased composition (basic and acidic residues). The residue at position 353 (Thr353) is a Phosphothreonine. One can recognise a PDZ 3 domain in the interval Ser420–Lys501. Residues Gly515–Ala583 form the SH3 domain. The Guanylate kinase-like domain occupies Ser609 to Gln790. 2 positions are modified to phosphoserine: Ser616 and Ser621. The tract at residues Tyr632 to Arg875 is occludin (OCLN)-binding region. A Phosphothreonine modification is found at Thr808. Phosphoserine occurs at positions 809 and 820. Residue Tyr821 is modified to Phosphotyrosine. Ser823, Ser827, and Ser836 each carry phosphoserine. Disordered regions lie at residues Ala824–Pro976 and Glu1010–Asp1067. A phosphothreonine mark is found at Thr845, Thr847, Thr853, Thr860, and Thr867. Residues Glu878 to Asn891 are compositionally biased toward basic and acidic residues. Over residues Gln892–Pro905 the composition is skewed to low complexity. Ser911 carries the phosphoserine modification. Composition is skewed to polar residues over residues Pro933–Asn952 and Pro962–Pro976. Ser967 is modified (phosphoserine). Ser1070 bears the Phosphoserine mark. 3 disordered regions span residues Ser1091–His1212, Pro1224–Gln1261, and Lys1273–Ser1589. Over residues Gln1108–Glu1124 the composition is skewed to basic and acidic residues. Position 1138 is a phosphoserine (Ser1138). A phosphotyrosine mark is found at Tyr1139 and Tyr1164. The segment at Arg1150 to Pro1370 is actin-binding region (ABR). The segment covering Lys1273–His1286 has biased composition (basic and acidic residues). Residues Pro1300–Thr1310 are compositionally biased toward pro residues. Basic and acidic residues predominate over residues Pro1335 to Asp1346. Phosphotyrosine is present on Tyr1353. Phosphoserine is present on Ser1365. The segment covering His1387–Gly1401 has biased composition (polar residues). Positions Lys1402–Glu1419 are enriched in basic and acidic residues. At Ser1412 the chain carries Phosphoserine. Composition is skewed to polar residues over residues Asn1460–Val1471 and Ala1514–Pro1523. Basic and acidic residues predominate over residues Pro1539–Lys1548. 2 positions are modified to phosphoserine: Ser1546 and Ser1618. The region spanning Ala1635–Phe1769 is the ZU5 domain.

Belongs to the MAGUK family. In terms of assembly, homodimer. Forms heterodimers TJP3. Forms a heterodimer (via PDZ2 domain) with TJP2/ZO2 (via PDZ2 domain). Interacts with OCLN. Interacts with CALM, claudins, CGN/cingulin, CXADR, GJA12, GJD3 and UBN1. Interacts (via ZU5 domain) with CDC42BPB and MYZAP. Interacts (via PDZ domain) with GJA1. Interacts (via PDZ domains) with ANKRD2. Interacts with POPDC1 (via the C-terminus cytoplasmic tail). Interacts with HSPA4. Interacts with KIRREL1. Interacts with DLL1. Interacts with USP53 (via the C-terminal region). Interacts with DNMBP (via C-terminal domain); required for the apical cell-cell junction localization of DNMBP. Interacts with SPEF1. Interacts (via N-terminus) with CTNNA1. Interacts with CLDN18. Interacts with CLDN16 (via TRV motif); this is a prerequisite for anchoring of CLDN16 at the tight junction. Interacts with PKP1; the interaction facilitates TJP1/ZO-1 localization to the plasma membrane. Interacts with PATJ (via PDZ1-6 domains); the interaction is required for attachment and extension of TJP1/ZO1 condensates along the apical cell interface. Post-translationally, phosphorylated at tyrosine redidues in response to epidermal growth factor (EGF). This response is dependent on an intact actin microfilament system. Dephosphorylated by PTPRJ.

It is found in the cell membrane. The protein resides in the cell junction. The protein localises to the tight junction. It localises to the gap junction. Its function is as follows. TJP1, TJP2, and TJP3 are closely related scaffolding proteins that link tight junction (TJ) transmembrane proteins such as claudins, junctional adhesion molecules, and occludin to the actin cytoskeleton. Forms a multistranded TJP1/ZO1 condensate which elongates to form a tight junction belt, the belt is anchored at the apical cell membrane via interaction with PATJ. The tight junction acts to limit movement of substances through the paracellular space and as a boundary between the compositionally distinct apical and basolateral plasma membrane domains of epithelial and endothelial cells. Necessary for lumenogenesis, and particularly efficient epithelial polarization and barrier formation. Plays a role in the regulation of cell migration by targeting CDC42BPBb to the leading edge of migrating cells. With TJP2 and TJP3, participates in the junctional retention and stability of the transcription factor DBPA, but is not involved in its shuttling to the nucleus. May play a role in mediating cell morphology changes during ameloblast differentiation via its role in tight junctions. In Canis lupus familiaris (Dog), this protein is Tight junction protein 1.